A 412-amino-acid polypeptide reads, in one-letter code: Proteasome-activating nucleotidase 2 (412 aa).

Residues 28-74 (LRQHFERMVDVNRELDQRLQNADDRHAELVDEVDQMKARNEALKTAS) adopt a coiled-coil conformation. Residues 196–201 (GTGKTM) and H335 each bind ATP. The interval 409 to 412 (DYQY) is docks into pockets in the proteasome alpha-ring to cause gate opening.

It belongs to the AAA ATPase family. As to quaternary structure, homohexamer. The hexameric complex has a two-ring architecture resembling a top hat that caps the 20S proteasome core at one or both ends. Upon ATP-binding, the C-terminus of PAN interacts with the alpha-rings of the proteasome core by binding to the intersubunit pockets.

The protein resides in the cytoplasm. ATPase which is responsible for recognizing, binding, unfolding and translocation of substrate proteins into the archaeal 20S proteasome core particle. Is essential for opening the gate of the 20S proteasome via an interaction with its C-terminus, thereby allowing substrate entry and access to the site of proteolysis. Thus, the C-termini of the proteasomal ATPase function like a 'key in a lock' to induce gate opening and therefore regulate proteolysis. Unfolding activity requires energy from ATP hydrolysis, whereas ATP binding alone promotes ATPase-20S proteasome association which triggers gate opening, and supports translocation of unfolded substrates. This Haloferax volcanii (strain ATCC 29605 / DSM 3757 / JCM 8879 / NBRC 14742 / NCIMB 2012 / VKM B-1768 / DS2) (Halobacterium volcanii) protein is Proteasome-activating nucleotidase 2.